A 78-amino-acid chain; its full sequence is Acyl carrier protein (78 aa).

Residues 1–76 (MSLEDDVKLI…DVITYIKTRQ (76 aa)) form the Carrier domain. Residue Ser-36 is modified to O-(pantetheine 4'-phosphoryl)serine.

Belongs to the acyl carrier protein (ACP) family. In terms of processing, 4'-phosphopantetheine is transferred from CoA to a specific serine of apo-ACP by AcpS. This modification is essential for activity because fatty acids are bound in thioester linkage to the sulfhydryl of the prosthetic group.

The protein resides in the cytoplasm. The protein operates within lipid metabolism; fatty acid biosynthesis. Functionally, carrier of the growing fatty acid chain in fatty acid biosynthesis. This Chlamydia felis (strain Fe/C-56) (Chlamydophila felis) protein is Acyl carrier protein.